The primary structure comprises 160 residues: MTKKKVHKPGSATIALNKRARHEYFIEEEFEAGLSLQGWEVKSLRAGKANISDSYVILIDGEAFLFGANFTPLAVASSHYVCDPIRTRKLLLNQRELESLFGRINREGYTVVALSLYWKNAWCKVKIGVAKGKKQHDKRSDLKDREWQVDKARIMKHAGR.

It belongs to the SmpB family.

Its subcellular location is the cytoplasm. Required for rescue of stalled ribosomes mediated by trans-translation. Binds to transfer-messenger RNA (tmRNA), required for stable association of tmRNA with ribosomes. tmRNA and SmpB together mimic tRNA shape, replacing the anticodon stem-loop with SmpB. tmRNA is encoded by the ssrA gene; the 2 termini fold to resemble tRNA(Ala) and it encodes a 'tag peptide', a short internal open reading frame. During trans-translation Ala-aminoacylated tmRNA acts like a tRNA, entering the A-site of stalled ribosomes, displacing the stalled mRNA. The ribosome then switches to translate the ORF on the tmRNA; the nascent peptide is terminated with the 'tag peptide' encoded by the tmRNA and targeted for degradation. The ribosome is freed to recommence translation, which seems to be the essential function of trans-translation. The polypeptide is SsrA-binding protein (Enterobacter sp. (strain 638)).